Here is a 466-residue protein sequence, read N- to C-terminus: Acetyl-coenzyme A carboxylase carboxyl transferase subunit beta, chloroplastic (466 aa).

The region spanning 198 to 466 (LWIQCENCYE…FPLNQNSIGQ (269 aa)) is the CoA carboxyltransferase N-terminal domain. Zn(2+)-binding residues include Cys202, Cys205, Cys221, and Cys224. The C4-type zinc finger occupies 202 to 224 (CENCYELNYKKLLKSKMRICDEC).

The protein belongs to the AccD/PCCB family. As to quaternary structure, acetyl-CoA carboxylase is a heterohexamer composed of biotin carboxyl carrier protein, biotin carboxylase and 2 subunits each of ACCase subunit alpha and ACCase plastid-coded subunit beta (accD). Zn(2+) serves as cofactor.

It localises to the plastid. Its subcellular location is the chloroplast stroma. The enzyme catalyses N(6)-carboxybiotinyl-L-lysyl-[protein] + acetyl-CoA = N(6)-biotinyl-L-lysyl-[protein] + malonyl-CoA. Its pathway is lipid metabolism; malonyl-CoA biosynthesis; malonyl-CoA from acetyl-CoA: step 1/1. Component of the acetyl coenzyme A carboxylase (ACC) complex. Biotin carboxylase (BC) catalyzes the carboxylation of biotin on its carrier protein (BCCP) and then the CO(2) group is transferred by the transcarboxylase to acetyl-CoA to form malonyl-CoA. The polypeptide is Acetyl-coenzyme A carboxylase carboxyl transferase subunit beta, chloroplastic (Fagopyrum esculentum subsp. ancestrale (Wild buckwheat)).